We begin with the raw amino-acid sequence, 642 residues long: Threonine--tRNA ligase (642 aa).

The region spanning 1–61 is the TGS domain; it reads MPVITLPDGS…ETDVDLAIIT (61 aa). The interval 243-534 is catalytic; that stretch reads DHRKIGKQLD…LIEEYAGKFP (292 aa). Positions 334, 385, and 511 each coordinate Zn(2+).

The protein belongs to the class-II aminoacyl-tRNA synthetase family. In terms of assembly, homodimer. Requires Zn(2+) as cofactor.

It is found in the cytoplasm. The catalysed reaction is tRNA(Thr) + L-threonine + ATP = L-threonyl-tRNA(Thr) + AMP + diphosphate + H(+). Its function is as follows. Catalyzes the attachment of threonine to tRNA(Thr) in a two-step reaction: L-threonine is first activated by ATP to form Thr-AMP and then transferred to the acceptor end of tRNA(Thr). Also edits incorrectly charged L-seryl-tRNA(Thr). This is Threonine--tRNA ligase from Shewanella loihica (strain ATCC BAA-1088 / PV-4).